Reading from the N-terminus, the 745-residue chain is Probable GMP synthase [glutamine-hydrolyzing] (745 aa).

Positions 1–37 (MKRSSSMLDINEDSQHSTNKAPPPKKAPEDRFDSANM) are disordered. The Glutamine amidotransferase type-1 domain maps to 60-252 (RIAILDFGAQ…LFKVVGCCGN (193 aa)). Residue C138 is the For GATase activity of the active site. Catalysis depends on residues H226 and E228. Residues 253 to 461 (FTIQNREQSC…LGLPESIVQR (209 aa)) enclose the GMPS ATP-PPase domain. 280-286 (SGGVDSA) lines the ATP pocket. Residues R363, D563, Q662, K737, and E743 each contribute to the substrate site.

In terms of assembly, homodimer.

It catalyses the reaction XMP + L-glutamine + ATP + H2O = GMP + L-glutamate + AMP + diphosphate + 2 H(+). It participates in purine metabolism; GMP biosynthesis; GMP from XMP (L-Gln route): step 1/1. The polypeptide is Probable GMP synthase [glutamine-hydrolyzing] (gmps-1) (Caenorhabditis elegans).